A 185-amino-acid chain; its full sequence is Ribosome-recycling factor (185 aa).

It belongs to the RRF family.

It is found in the cytoplasm. Its function is as follows. Responsible for the release of ribosomes from messenger RNA at the termination of protein biosynthesis. May increase the efficiency of translation by recycling ribosomes from one round of translation to another. The chain is Ribosome-recycling factor from Erwinia tasmaniensis (strain DSM 17950 / CFBP 7177 / CIP 109463 / NCPPB 4357 / Et1/99).